A 605-amino-acid polypeptide reads, in one-letter code: LysM domain receptor-like kinase 10 (605 aa).

The signal sequence occupies residues 1–20; sequence MFSLPALLIGACAFAAAAVA. The Extracellular portion of the chain corresponds to 21–245; that stretch reads ASGDGCRAGC…GMGNSLSGGA (225 aa). 3 cysteine pairs are disulfide-bonded: Cys26–Cys89, Cys30–Cys161, and Cys87–Cys159. N-linked (GlcNAc...) asparagine glycosylation occurs at Asn44. Chitin is bound by residues 115–121 and 142–148; these read GGDTYDA and PPGRIPG. 2 N-linked (GlcNAc...) asparagine glycosylation sites follow: Asn154 and Asn158. The 48-residue stretch at 174–221 folds into the LysM domain; sequence LTYPLWDGETLESVAAQYGFSSPAEMELIRRYNPGMGGVSGKGIVFIP. N-linked (GlcNAc...) asparagine glycosylation is present at Asn226. The helical transmembrane segment at 246 to 266 threads the bilayer; the sequence is IAGIVIACIAIFIVAIWLIIM. Residues 267 to 605 lie on the Cytoplasmic side of the membrane; that stretch reads FYRWQKFRKA…DLRDMDYHPF (339 aa). Ser278 is modified (phosphoserine). Positions 317 to 591 constitute a Protein kinase domain; the sequence is FSMEHKIGQG…RSVVVALMAL (275 aa). ATP is bound by residues 323-331 and Lys344; that span reads IGQGGFGSV. Residue Asp436 is the Proton acceptor of the active site.

This sequence belongs to the protein kinase superfamily. Ser/Thr protein kinase family.

It is found in the cell membrane. The enzyme catalyses L-seryl-[protein] + ATP = O-phospho-L-seryl-[protein] + ADP + H(+). It catalyses the reaction L-threonyl-[protein] + ATP = O-phospho-L-threonyl-[protein] + ADP + H(+). This chain is LysM domain receptor-like kinase 10, found in Oryza sativa subsp. japonica (Rice).